We begin with the raw amino-acid sequence, 960 residues long: Dynamin-like GTPase OPA1, mitochondrial (960 aa).

Residues 1–87 (MWRAGRAALA…TKYGYQPRRN (87 aa)) constitute a mitochondrion transit peptide. Residues 88–96 (FWPARLAAR) lie on the Mitochondrial matrix side of the membrane. The chain crosses the membrane as a helical span at residues 97–113 (LLKLRYIILGSAVGGGY). Over 114–770 (TAKKTFDEWK…NAIENMIGPD (657 aa)) the chain is Mitochondrial intermembrane. Residues 210-254 (SDKEKIDQLQEELLHTQLKYQRILERLEKENKELRKLVLQKDDKG) adopt a coiled-coil conformation. An LQQQIQ motif motif is present at residues 217 to 222 (QLQEEL). Lysine 228 bears the N6-acetyllysine mark. Positions 234-239 (ERLEKE) match the LQQQIQ motif motif. A Dynamin-type G domain is found at 285-561 (QDHLPRVVVV…FWKMVRESVE (277 aa)). Residues 295–302 (GDQSAGKT) form a G1 motif region. GTP is bound by residues serine 298, glycine 300, lysine 301, threonine 302, serine 303, and glycine 317. Threonine 302 provides a ligand contact to Mg(2+). The tract at residues 321 to 324 (MMTR) is G2 motif. 2 residues coordinate Mg(2+): threonine 323 and aspartate 398. The G3 motif stretch occupies residues 398–401 (DLPG). The tract at residues 467-470 (TKVD) is G4 motif. 3 residues coordinate GTP: lysine 468, aspartate 470, and threonine 503. A G5 motif region spans residues 501–504 (VVTG). Stalk region stretches follow at residues 589–836 (DRNE…IKDT) and 874–928 (CNDV…VKLL). A paddle region region spans residues 736 to 856 (SDKQQWDAAI…KTALNHCNLC (121 aa)). Residues 771 to 781 (WKKRWIYWKNR) lie within the membrane without spanning it. Over 782–960 (TQEQCVHNET…AFIEALHQEK (179 aa)) the chain is Mitochondrial intermembrane. Residues cysteine 856 and cysteine 874 are joined by a disulfide bond. A coiled-coil region spans residues 895-960 (RQQLTNTEVR…AFIEALHQEK (66 aa)).

This sequence belongs to the TRAFAC class dynamin-like GTPase superfamily. Dynamin/Fzo/YdjA family. Oligomeric complex consisting of membrane-bound and soluble forms of OPA1. Interacts with RCC1L; RCC1L acts as a guanine nucleotide exchange factor (GEF) for OPA1 by exchanging bound GDP for free GTP. Interacts with CHCHD3 and IMMT; these interactions occur preferentially with soluble OPA1 forms. Interacts with PRELID1. Post-translationally, cleaved by OMA1 or YME1L downstream of the transmembrane region in response to different signals to generate soluble forms. Cleaved by OMA1 at position S1 following stress conditions, generating the short soluble form (Dynamin-like GTPase OPA1, short form; S-OPA1). AFG3L2 is involved in the regulation of OMA1-dependent processing of OPA1. PARL-dependent proteolytic processing releases an antiapoptotic soluble form not required for mitochondrial fusion. In terms of processing, cleavage at position S2 by YME1L is required to mediate oxidative phosphorylation (OXPHOS)-induced mitochondrial fusion. Cleavage occurs in the sequence motif Leu-Gln-Gln-Gln-Ile-Gln (LQQQIQ). Expressed in brain as well as retinal ganglion, starbust amacrine and horizontal cells of the retina. Absent from nerve fibers and photoreceptor cells of the retina.

The protein resides in the mitochondrion inner membrane. Its subcellular location is the mitochondrion intermembrane space. It catalyses the reaction GTP + H2O = GDP + phosphate + H(+). Activated by guanine nucleotide exchange factor RCC1L. Functionally, dynamin-related GTPase that is essential for normal mitochondrial morphology by mediating fusion of the mitochondrial inner membranes, regulating cristae morphology and maintaining respiratory chain function. Exists in two forms: the transmembrane, long form (Dynamin-like GTPase OPA1, long form; L-OPA1), which is tethered to the inner mitochondrial membrane, and the short soluble form (Dynamin-like GTPase OPA1, short form; S-OPA1), which results from proteolytic cleavage and localizes in the intermembrane space. Both forms (L-OPA1 and S-OPA1) cooperate to catalyze the fusion of the mitochondrial inner membrane. The equilibrium between L-OPA1 and S-OPA1 is essential: excess levels of S-OPA1, produced by cleavage by OMA1 following loss of mitochondrial membrane potential, lead to an impaired equilibrium between L-OPA1 and S-OPA1, inhibiting mitochondrial fusion. The balance between L-OPA1 and S-OPA1 also influences cristae shape and morphology. Involved in remodeling cristae and the release of cytochrome c during apoptosis. Proteolytic processing by PARL in response to intrinsic apoptotic signals may lead to disassembly of OPA1 oligomers and release of the caspase activator cytochrome C (CYCS) into the mitochondrial intermembrane space. Acts as a regulator of T-helper Th17 cells, which are characterized by cells with fused mitochondria with tight cristae, by mediating mitochondrial membrane remodeling: OPA1 is required for interleukin-17 (IL-17) production. Its role in mitochondrial morphology is required for mitochondrial genome maintenance. In terms of biological role, constitutes the transmembrane long form (L-OPA1) that plays a central role in mitochondrial inner membrane fusion and cristae morphology. L-OPA1 and the soluble short form (S-OPA1) form higher-order helical assemblies that coordinate the fusion of mitochondrial inner membranes. Inner membrane-anchored L-OPA1 molecules initiate membrane remodeling by recruiting soluble S-OPA1 to rapidly polymerize into a flexible cylindrical scaffold encaging the mitochondrial inner membrane. Once at the membrane surface, the formation of S-OPA1 helices induce bilayer curvature. OPA1 dimerization through the paddle region, which inserts into cardiolipin-containing membrane, promotes GTP hydrolysis and the helical assembly of a flexible OPA1 lattice on the membrane, which drives membrane curvature and mitochondrial fusion. Plays a role in the maintenance and remodeling of mitochondrial cristae, some invaginations of the mitochondrial inner membrane that provide an increase in the surface area. Probably acts by forming helical filaments at the inside of inner membrane tubes with the shape and dimensions of crista junctions. The equilibrium between L-OPA1 and S-OPA1 influences cristae shape and morphology: increased L-OPA1 levels promote cristae stacking and elongated mitochondria, while increased S-OPA1 levels correlated with irregular cristae packing and round mitochondria shape. Constitutes the soluble short form (S-OPA1) generated by cleavage by OMA1, which plays a central role in mitochondrial inner membrane fusion and cristae morphology. The transmembrane long form (L-OPA1) and the S-OPA1 form higher-order helical assemblies that coordinate the fusion of mitochondrial inner membranes. Inner membrane-anchored L-OPA1 molecules initiate membrane remodeling by recruiting soluble S-OPA1 to rapidly polymerize into a flexible cylindrical scaffold encaging the mitochondrial inner membrane. Once at the membrane surface, the formation of S-OPA1 helices induce bilayer curvature. OPA1 dimerization through the paddle region, which inserts into cardiolipin-containing membrane, promotes GTP hydrolysis and the helical assembly of a flexible OPA1 lattice on the membrane, which drives membrane curvature and mitochondrial fusion. Excess levels of S-OPA1 produced by cleavage by OMA1 following stress conditions that induce loss of mitochondrial membrane potential, lead to an impaired equilibrium between L-OPA1 and S-OPA1, thereby inhibiting mitochondrial fusion. Involved in mitochondrial safeguard in response to transient mitochondrial membrane depolarization by mediating flickering: cleavage by OMA1 leads to excess production of S-OPA1, preventing mitochondrial hyperfusion. Plays a role in the maintenance and remodeling of mitochondrial cristae, some invaginations of the mitochondrial inner membrane that provide an increase in the surface area. Probably acts by forming helical filaments at the inside of inner membrane tubes with the shape and dimensions of crista junctions. The equilibrium between L-OPA1 and S-OPA1 influences cristae shape and morphology: increased L-OPA1 levels promote cristae stacking and elongated mitochondria, while increased S-OPA1 levels correlated with irregular cristae packing and round mitochondria shape. Its function is as follows. Isoforms that contain the alternative exon 4b are required for mitochondrial genome maintenance, possibly by anchoring the mitochondrial nucleoids to the inner mitochondrial membrane. This chain is Dynamin-like GTPase OPA1, mitochondrial, found in Rattus norvegicus (Rat).